The chain runs to 344 residues: Follistatin (344 aa).

The first 29 residues, M1–A29, serve as a signal peptide directing secretion. The region spanning G30–G103 is the TB domain. Disulfide bonds link C32–C55, C42–C88, C56–C91, C95–C106, C100–C116, C118–C150, C122–C143, C132–C164, C168–C179, C173–C189, C192–C225, C196–C218, C207–C239, C245–C256, C250–C267, C270–C302, C274–C295, and C284–C316. A Follistatin-like 1 domain is found at T94–V117. Positions N112–K166 constitute a Kazal-like 1 domain. N124 is a glycosylation site (N-linked (GlcNAc...) asparagine). The Follistatin-like 2 domain occupies T167–V190. Positions N186–K241 constitute a Kazal-like 2 domain. The region spanning S244–S268 is the Follistatin-like 3 domain. The Kazal-like 3 domain maps to K261 to S318. N-linked (GlcNAc...) asparagine glycosylation occurs at N288. Residues C316 to W344 are disordered. A compositionally biased stretch (acidic residues) spans E321–D333.

In terms of assembly, monomer.

The protein localises to the secreted. In terms of biological role, binds directly to activin and functions as an activin antagonist. Specific inhibitor of the biosynthesis and secretion of pituitary follicle stimulating hormone (FSH). This Bubalus bubalis (Domestic water buffalo) protein is Follistatin.